A 90-amino-acid polypeptide reads, in one-letter code: MALDSAKKAEIVAKFARKSGDTGSPEVQVALLTTRISELTGHLKINKKDFSSRLGLLKLVGRRKRLLKYLKAKNYESYTKLIAELGIRDK.

This sequence belongs to the universal ribosomal protein uS15 family. Part of the 30S ribosomal subunit. Forms a bridge to the 50S subunit in the 70S ribosome, contacting the 23S rRNA.

Its function is as follows. One of the primary rRNA binding proteins, it binds directly to 16S rRNA where it helps nucleate assembly of the platform of the 30S subunit by binding and bridging several RNA helices of the 16S rRNA. In terms of biological role, forms an intersubunit bridge (bridge B4) with the 23S rRNA of the 50S subunit in the ribosome. This chain is Small ribosomal subunit protein uS15, found in Campylobacter fetus subsp. fetus (strain 82-40).